The chain runs to 376 residues: N-acetyldiaminopimelate deacetylase (376 aa).

The active site involves D69. E128 acts as the Proton acceptor in catalysis.

Belongs to the peptidase M20A family. N-acetyldiaminopimelate deacetylase subfamily.

The catalysed reaction is N-acetyl-(2S,6S)-2,6-diaminopimelate + H2O = (2S,6S)-2,6-diaminopimelate + acetate. It participates in amino-acid biosynthesis; L-lysine biosynthesis via DAP pathway; LL-2,6-diaminopimelate from (S)-tetrahydrodipicolinate (acetylase route): step 3/3. Its function is as follows. Catalyzes the conversion of N-acetyl-diaminopimelate to diaminopimelate and acetate. The sequence is that of N-acetyldiaminopimelate deacetylase from Bacillus cereus (strain AH820).